Consider the following 315-residue polypeptide: Glutamyl-Q tRNA(Asp) synthetase (315 aa).

L-glutamate is bound by residues 21 to 25 and Glu-63; that span reads RFAPS. Positions 24–34 match the 'HIGH' region motif; the sequence is PSPSGLLHFGS. Positions 119, 121, 133, and 137 each coordinate Zn(2+). L-glutamate contacts are provided by Tyr-190 and Arg-208. A 'KMSKS' region motif is present at residues 251 to 255; sequence KLSKQ. Lys-254 is a binding site for ATP.

This sequence belongs to the class-I aminoacyl-tRNA synthetase family. GluQ subfamily. Zn(2+) serves as cofactor.

Its function is as follows. Catalyzes the tRNA-independent activation of glutamate in presence of ATP and the subsequent transfer of glutamate onto a tRNA(Asp). Glutamate is transferred on the 2-amino-5-(4,5-dihydroxy-2-cyclopenten-1-yl) moiety of the queuosine in the wobble position of the QUC anticodon. In Colwellia psychrerythraea (strain 34H / ATCC BAA-681) (Vibrio psychroerythus), this protein is Glutamyl-Q tRNA(Asp) synthetase.